A 575-amino-acid chain; its full sequence is Amino-acid acetyltransferase, mitochondrial (575 aa).

A mitochondrion-targeting transit peptide spans 1–35; sequence MSKLRNLNRQFISNLKTHETVTNAKRNLILSILKS. Positions 398 to 557 constitute an N-acetyltransferase domain; that stretch reads FTLNNLVQDG…QGIPGGVNIH (160 aa).

Belongs to the acetyltransferase family.

The protein resides in the mitochondrion. It catalyses the reaction L-glutamate + acetyl-CoA = N-acetyl-L-glutamate + CoA + H(+). The protein operates within amino-acid biosynthesis; L-arginine biosynthesis; N(2)-acetyl-L-ornithine from L-glutamate: step 1/4. N-acetylglutamate synthase involved in arginine biosynthesis. The protein is Amino-acid acetyltransferase, mitochondrial (ARG2) of Debaryomyces hansenii (strain ATCC 36239 / CBS 767 / BCRC 21394 / JCM 1990 / NBRC 0083 / IGC 2968) (Yeast).